We begin with the raw amino-acid sequence, 511 residues long: Lysine--tRNA ligase (511 aa).

Mg(2+) contacts are provided by E421 and E428.

Belongs to the class-II aminoacyl-tRNA synthetase family. In terms of assembly, homodimer. The cofactor is Mg(2+).

The protein resides in the cytoplasm. It catalyses the reaction tRNA(Lys) + L-lysine + ATP = L-lysyl-tRNA(Lys) + AMP + diphosphate. The sequence is that of Lysine--tRNA ligase from Herminiimonas arsenicoxydans.